The chain runs to 705 residues: Elongation factor G (705 aa).

Residues 8–294 (NLYRNFGIMA…AVIDYLPSPL (287 aa)) enclose the tr-type G domain. GTP contacts are provided by residues 17-24 (AHIDAGKT), 92-96 (DTPGH), and 146-149 (NKMD).

The protein belongs to the TRAFAC class translation factor GTPase superfamily. Classic translation factor GTPase family. EF-G/EF-2 subfamily.

The protein resides in the cytoplasm. In terms of biological role, catalyzes the GTP-dependent ribosomal translocation step during translation elongation. During this step, the ribosome changes from the pre-translocational (PRE) to the post-translocational (POST) state as the newly formed A-site-bound peptidyl-tRNA and P-site-bound deacylated tRNA move to the P and E sites, respectively. Catalyzes the coordinated movement of the two tRNA molecules, the mRNA and conformational changes in the ribosome. In Ruegeria pomeroyi (strain ATCC 700808 / DSM 15171 / DSS-3) (Silicibacter pomeroyi), this protein is Elongation factor G.